Consider the following 608-residue polypeptide: Albumin 2 (608 aa).

The first 14 residues, 1-14 (MQWLSVCSLLVLLS), serve as a signal peptide directing secretion. The propeptide occupies 15–18 (VLSR). 3 consecutive Albumin domains span residues 19 to 205 (SQAQ…TFQH), 206 to 398 (AIAK…AGSD), and 402 to 600 (KITD…KLVS). Intrachain disulfides connect C26-C72, C71-C80, C93-C108, C107-C118, C142-C187, C186-C195, C218-C264, C263-C271, C283-C299, C298-C309, C336-C381, C380-C389, C414-C460, C459-C471, C484-C500, C499-C510, C537-C582, and C581-C590. A glycan (N-linked (GlcNAc...) asparagine) is linked at N501.

This sequence belongs to the ALB/AFP/VDB family. As to expression, plasma.

The protein resides in the secreted. In terms of biological role, binds water, Ca(2+), Na(+), K(+), fatty acids, hormones, bilirubin and drugs. Its main function is the regulation of the colloidal osmotic pressure of blood. The chain is Albumin 2 (alb2) from Salmo salar (Atlantic salmon).